Here is a 1146-residue protein sequence, read N- to C-terminus: Probable phospholipid-transporting ATPase IIB (1146 aa).

Residues 1-143 (MADQIPLYPV…IKNQKYNVFT (143 aa)) are Cytoplasmic-facing. Residues 144–164 (FIPGVLYEQFKFFLNLYFLVV) form a helical membrane-spanning segment. Over 165-172 (SCSQFVPA) the chain is Extracellular. Residues 173-193 (LKIGYLYTYWAPLGFVLAVTI) traverse the membrane as a helical segment. The Cytoplasmic portion of the chain corresponds to 194–381 (AREAIDEFRR…LDLELNQLTK (188 aa)). A helical membrane pass occupies residues 382 to 402 (ALFLALVVLSVVMVTLQGFAG). Over 403 to 407 (PWYRN) the chain is Extracellular. The helical transmembrane segment at 408–427 (LFRFLLLFSYIIPISLRVNL) threads the bilayer. The Cytoplasmic portion of the chain corresponds to 428-938 (DMGKAAYGWM…ALGQFVMHRG (511 aa)). Residue aspartate 467 is the 4-aspartylphosphate intermediate of the active site. Positions 467, 468, and 469 each coordinate ATP. Aspartate 467 lines the Mg(2+) pocket. A Mg(2+)-binding site is contributed by threonine 469. Over residues 508–519 (VHSQPSGHNPSS) the composition is skewed to polar residues. The disordered stretch occupies residues 508–535 (VHSQPSGHNPSSAPLRRSQSSTPKVKKS). ATP contacts are provided by glutamate 590, phenylalanine 632, lysine 637, lysine 656, arginine 685, threonine 686, threonine 765, glycine 766, aspartate 767, arginine 847, and lysine 853. Aspartate 873 contributes to the Mg(2+) binding site. 2 residues coordinate ATP: asparagine 876 and aspartate 877. Residue aspartate 877 coordinates Mg(2+). Residues 939-959 (LIISTMQAVFSSVFYFASVPL) form a helical membrane-spanning segment. Residues 960–961 (YQ) are Extracellular-facing. Residues 962-982 (GFLMVGYATIYTMFPVFSLVL) form a helical membrane-spanning segment. Over 983–1011 (DQDVKPEMAILYPELYKDLTKGRSLSFKT) the chain is Cytoplasmic. A helical membrane pass occupies residues 1012–1032 (FLIWVLISIYQGGILMYGALL). Residues 1033-1040 (LFEDEFVH) lie on the Extracellular side of the membrane. Residues 1041–1061 (VVAISFTALILTELLMVALTI) form a helical membrane-spanning segment. Topologically, residues 1062-1065 (RTWH) are cytoplasmic. Residues 1066–1086 (WLMVVAEFLSLGCYVASLAFL) traverse the membrane as a helical segment. At 1087-1105 (NEYFGIGRVSFGAFLDVAF) the chain is on the extracellular side. A helical membrane pass occupies residues 1106–1128 (ITTVTFLWKVSAITVVSCLPLYV). Over 1129–1146 (LKYLKRKLSPPSYSKLSS) the chain is Cytoplasmic.

This sequence belongs to the cation transport ATPase (P-type) (TC 3.A.3) family. Type IV subfamily. The cofactor is Mg(2+). As to expression, found in most tissues except spleen and muscle. Most abundant in testis. Also detected in fetal tissues.

Its subcellular location is the golgi apparatus. It is found in the trans-Golgi network membrane. The catalysed reaction is ATP + H2O + phospholipidSide 1 = ADP + phosphate + phospholipidSide 2.. This Mus musculus (Mouse) protein is Probable phospholipid-transporting ATPase IIB (Atp9b).